Consider the following 151-residue polypeptide: Ribosome maturation factor RimP (151 aa).

This sequence belongs to the RimP family.

The protein localises to the cytoplasm. Functionally, required for maturation of 30S ribosomal subunits. This chain is Ribosome maturation factor RimP, found in Shewanella baltica (strain OS223).